The primary structure comprises 213 residues: Uracil phosphoribosyltransferase (213 aa).

5-phospho-alpha-D-ribose 1-diphosphate contacts are provided by residues Arg78, Arg103, and 131-139 (DPMLATGGT). Residues Ile197 and 202–204 (GDA) contribute to the uracil site. Asp203 serves as a coordination point for 5-phospho-alpha-D-ribose 1-diphosphate.

This sequence belongs to the UPRTase family. Requires Mg(2+) as cofactor.

The enzyme catalyses UMP + diphosphate = 5-phospho-alpha-D-ribose 1-diphosphate + uracil. It functions in the pathway pyrimidine metabolism; UMP biosynthesis via salvage pathway; UMP from uracil: step 1/1. Its activity is regulated as follows. Allosterically activated by GTP. Catalyzes the conversion of uracil and 5-phospho-alpha-D-ribose 1-diphosphate (PRPP) to UMP and diphosphate. The protein is Uracil phosphoribosyltransferase of Bifidobacterium longum subsp. infantis (strain ATCC 15697 / DSM 20088 / JCM 1222 / NCTC 11817 / S12).